The primary structure comprises 856 residues: DNA mismatch repair protein MutS (856 aa).

617–624 (GPNMGGKS) contributes to the ATP binding site.

The protein belongs to the DNA mismatch repair MutS family.

Functionally, this protein is involved in the repair of mismatches in DNA. It is possible that it carries out the mismatch recognition step. This protein has a weak ATPase activity. The chain is DNA mismatch repair protein MutS from Psychromonas ingrahamii (strain DSM 17664 / CCUG 51855 / 37).